The primary structure comprises 467 residues: Uronate isomerase (467 aa).

It belongs to the metallo-dependent hydrolases superfamily. Uronate isomerase family.

It carries out the reaction D-glucuronate = D-fructuronate. The enzyme catalyses aldehydo-D-galacturonate = keto-D-tagaturonate. It participates in carbohydrate metabolism; pentose and glucuronate interconversion. The protein is Uronate isomerase of Streptococcus uberis (strain ATCC BAA-854 / 0140J).